We begin with the raw amino-acid sequence, 101 residues long: Large ribosomal subunit protein uL23 (101 aa).

This sequence belongs to the universal ribosomal protein uL23 family. As to quaternary structure, part of the 50S ribosomal subunit. Contacts protein L29, and trigger factor when it is bound to the ribosome.

Its function is as follows. One of the early assembly proteins it binds 23S rRNA. One of the proteins that surrounds the polypeptide exit tunnel on the outside of the ribosome. Forms the main docking site for trigger factor binding to the ribosome. The protein is Large ribosomal subunit protein uL23 of Synechocystis sp. (strain ATCC 27184 / PCC 6803 / Kazusa).